The sequence spans 891 residues: Transportin-1 (891 aa).

19 HEAT repeats span residues 14-40, 45-83, 92-125, 131-168, 178-208, 221-248, 260-287, 303-381, 389-420, 432-459, 477-510, 518-551, 559-597, 605-653, 664-695, 703-740, 748-784, 792-825, and 834-866; these read GLREICTLLDAHISPNSDQARIWQQLQ, FPDFNNYLVFLLARGEGKSFEARQAAGLLLKNNLRATFS, YVKSELLPCIGATNKAIRSTVGTVISVLFQIVRV, LFQALHQCLDSNDLDHMEGAMDAIYKICEDVPEELDVD, NVFMPRLLQFFQSTHAILRKLALGCINQYIV, YLQGLFNLAKDPSADVRKLVCSAWVQLI, KNVTELMLQANKDSDDEVALEACEFWSA, PRLI…LSNV, TLMPLIQQNLARTDDDAWKEREAAVLSIGAIA, PQIVAFLIPLLDDKFPLIRSITCWTLSR, FDKILLGLLRRVLDTNKRVQEAACSAFATLEEEA, LGIILQHLMCAYGKYQRRNLRILYDALGTLADAV, KYLDIFMPPLITKWQQLANSDKDLFPLLECFTSIAQALG, EPVF…GLGA, LRDILLQCCMDEAADVRQSALALLGDLSRVCP, QEFLNVAAKQLNPQCVKEAVSVANNACWAIGELAIKIG, ITVVSCLVPILKSPEGLNKSLLENSAITLGRLCWVCP, DHFMQAWCNALCMIRDDFEKEDAFHGLCAMVAAN, and TFICQACASWNEIKSEGLHNEVCQILNGYKQML. The Importin N-terminal domain occupies 35-103; it reads IWQQLQHYSQ…KSELLPCIGA (69 aa). Residues 317–330 are compositionally biased toward acidic residues; that stretch reads DDDESLADAEEDES. Positions 317–337 are disordered; the sequence is DDDESLADAEEDESFPDRDQD.

It belongs to the importin beta family. Importin beta-2 subfamily.

The protein resides in the cytoplasm. It is found in the nucleus. Its subcellular location is the nucleoplasm. In terms of biological role, functions in nuclear protein import as nuclear transport receptor. Serves as receptor for nuclear localization signals (NLS) in cargo substrates. Is thought to mediate docking of the importin/substrate complex to the nuclear pore complex (NPC) through binding to nucleoporin and the complex is subsequently translocated through the pore by an energy requiring, Ran-dependent mechanism. At the nucleoplasmic side of the NPC, Ran binds to the importin, the importin/substrate complex dissociates and importin is re-exported from the nucleus to the cytoplasm where GTP hydrolysis releases Ran. The directionality of nuclear import is thought to be conferred by an asymmetric distribution of the GTP- and GDP-bound forms of Ran between the cytoplasm and nucleus. In Oryza sativa subsp. japonica (Rice), this protein is Transportin-1 (TRN1).